A 275-amino-acid polypeptide reads, in one-letter code: Tropinone reductase-like 2 (275 aa).

17 to 41 (IITGGASGIGACTAELFHENGAKVV) lines the NAD(+) pocket. Serine 150 serves as a coordination point for substrate. The Proton acceptor role is filled by tyrosine 163.

This sequence belongs to the short-chain dehydrogenases/reductases (SDR) family.

Has no tropinone reductase activity. The protein is Tropinone reductase-like 2 of Erythroxylum coca (Coca plant).